Reading from the N-terminus, the 69-residue chain is Small ribosomal subunit protein bS21 (69 aa).

Positions 49–69 (IESAKRKAEKKKRLFSKKDKA) are disordered.

This sequence belongs to the bacterial ribosomal protein bS21 family.

This is Small ribosomal subunit protein bS21 from Leptospira borgpetersenii serovar Hardjo-bovis (strain JB197).